The chain runs to 715 residues: Scinderin (715 aa).

An actin-severing region spans residues 1 to 363 (MAQGLYHEEF…DGFGKVYVTE (363 aa)). One copy of the Gelsolin-like 1 repeat lies at 27-77 (LELVPVPESAYGNFYVGDAYLVLHTTQASRGFTYRLHFWLGKECTQDESTA). Tyr-102 is subject to Phosphotyrosine. A 1,2-diacyl-sn-glycero-3-phospho-(1D-myo-inositol-4,5-bisphosphate) is bound by residues 112–119 (KGGLKYKA) and 138–146 (RLLHVKGRR). 4 Gelsolin-like repeats span residues 148–188 (VRAT…YERL), 265–307 (LVAE…QERK), 398–451 (VQIW…DELT), and 523–564 (TRIM…EEEK). The tract at residues 364–715 (KVAHVKQIPF…WFLGWDSSRW (352 aa)) is actin-binding, Ca-sensitive. The tract at residues 364-715 (KVAHVKQIPF…WFLGWDSSRW (352 aa)) is ca(2+)-dependent actin binding. The Ca(2+) site is built by Asn-538, Asp-539, and Glu-562. Tyr-599 carries the phosphotyrosine modification. The Gelsolin-like 6 repeat unit spans residues 626–668 (FIIEEVPGEFTQDDLAEDDVMLLDAWEQIFIWIGKDANEVEKS). The Ca(2+) site is built by Asp-643, Asp-644, and Glu-666.

The protein belongs to the villin/gelsolin family. In terms of processing, the N-terminus is blocked. In terms of tissue distribution, in the adrenal gland, expressed in the medulla but, in the cortex, found only in diffuse parts.

It localises to the cytoplasm. The protein resides in the cytoskeleton. It is found in the cell projection. Its subcellular location is the podosome. Its function is as follows. Ca(2+)-dependent actin filament-severing protein that has a regulatory function in exocytosis by affecting the organization of the microfilament network underneath the plasma membrane. In vitro, also has barbed end capping and nucleating activities in the presence of Ca(2+). Severing activity is inhibited by phosphatidylinositol 4,5-bis-phosphate (PIP2). Required for megakaryocyte differentiation, maturation, polyploidization and apoptosis with the release of platelet-like particles. Plays a role in osteoclastogenesis (OCG) and actin cytoskeletal organization in osteoclasts. Regulates chondrocyte proliferation and differentiation. Inhibits cell proliferation and tumorigenesis. Signaling is mediated by MAPK, p38 and JNK pathways. The sequence is that of Scinderin from Bos taurus (Bovine).